Consider the following 120-residue polypeptide: NAD(P)H-quinone oxidoreductase subunit 3 (120 aa).

3 helical membrane-spanning segments follow: residues 6-26, 64-84, and 89-109; these read GYDA…LALV, MFAL…PWAV, and LGLL…VALA.

Belongs to the complex I subunit 3 family. In terms of assembly, NDH-1 can be composed of about 15 different subunits; different subcomplexes with different compositions have been identified which probably have different functions.

It localises to the cellular thylakoid membrane. The catalysed reaction is a plastoquinone + NADH + (n+1) H(+)(in) = a plastoquinol + NAD(+) + n H(+)(out). It catalyses the reaction a plastoquinone + NADPH + (n+1) H(+)(in) = a plastoquinol + NADP(+) + n H(+)(out). Functionally, NDH-1 shuttles electrons from an unknown electron donor, via FMN and iron-sulfur (Fe-S) centers, to quinones in the respiratory and/or the photosynthetic chain. The immediate electron acceptor for the enzyme in this species is believed to be plastoquinone. Couples the redox reaction to proton translocation, and thus conserves the redox energy in a proton gradient. Cyanobacterial NDH-1 also plays a role in inorganic carbon-concentration. The polypeptide is NAD(P)H-quinone oxidoreductase subunit 3 (Synechococcus sp. (strain CC9605)).